The following is a 538-amino-acid chain: Nicotinate phosphoribosyltransferase (538 aa).

2 residues coordinate nicotinate: Y21 and T210. At H213 the chain carries Phosphohistidine. Residue R318 participates in nicotinate binding. T380 contacts 5-phospho-alpha-D-ribose 1-diphosphate.

This sequence belongs to the NAPRTase family. As to quaternary structure, homodimer. Requires Mg(2+) as cofactor. It depends on Mn(2+) as a cofactor. Post-translationally, transiently phosphorylated on a His residue during the reaction cycle. Phosphorylation strongly increases the affinity for substrates and increases the rate of nicotinate D-ribonucleotide production. Dephosphorylation regenerates the low-affinity form of the enzyme, leading to product release.

The protein localises to the cytoplasm. It is found in the cytosol. The catalysed reaction is nicotinate + 5-phospho-alpha-D-ribose 1-diphosphate + ATP + H2O = nicotinate beta-D-ribonucleotide + ADP + phosphate + diphosphate. It participates in cofactor biosynthesis; NAD(+) biosynthesis; nicotinate D-ribonucleotide from nicotinate: step 1/1. Catalyzes the first step in the biosynthesis of NAD from nicotinic acid, the ATP-dependent synthesis of beta-nicotinate D-ribonucleotide from nicotinate and 5-phospho-D-ribose 1-phosphate. Helps prevent cellular oxidative stress via its role in NAD biosynthesis. The chain is Nicotinate phosphoribosyltransferase (Naprt) from Rattus norvegicus (Rat).